The following is a 297-amino-acid chain: Glycine--tRNA ligase alpha subunit (297 aa).

The protein belongs to the class-II aminoacyl-tRNA synthetase family. As to quaternary structure, tetramer of two alpha and two beta subunits.

The protein localises to the cytoplasm. The enzyme catalyses tRNA(Gly) + glycine + ATP = glycyl-tRNA(Gly) + AMP + diphosphate. In Halalkalibacterium halodurans (strain ATCC BAA-125 / DSM 18197 / FERM 7344 / JCM 9153 / C-125) (Bacillus halodurans), this protein is Glycine--tRNA ligase alpha subunit (glyQ).